Here is a 198-residue protein sequence, read N- to C-terminus: Ribonuclease HII (198 aa).

The RNase H type-2 domain maps to 10-198 (QLVAGVDEVG…PVKRALGLAS (189 aa)). A divalent metal cation contacts are provided by D16, E17, and D108.

This sequence belongs to the RNase HII family. It depends on Mn(2+) as a cofactor. Mg(2+) serves as cofactor.

The protein resides in the cytoplasm. The catalysed reaction is Endonucleolytic cleavage to 5'-phosphomonoester.. Its function is as follows. Endonuclease that specifically degrades the RNA of RNA-DNA hybrids. The sequence is that of Ribonuclease HII from Shigella boydii serotype 4 (strain Sb227).